Reading from the N-terminus, the 583-residue chain is Epsin-2 (583 aa).

A 1,2-diacyl-sn-glycero-3-phospho-(1D-myo-inositol-4,5-bisphosphate) is bound by residues Arg8, Lys11, Arg25, Asn30, Arg63, and His73. One can recognise an ENTH domain in the interval 12-144 (NIVNSYSEAE…KDEERLKVER (133 aa)). Residues 165-181 (QITFGRGSSQPNLSISH) show a composition bias toward polar residues. The segment at 165-217 (QITFGRGSSQPNLSISHSEQEYGKAGGSPASYHGSTSPRVSSELEQARPQTSG) is disordered. Arg170 carries the omega-N-methylarginine modification. Ser173, Ser192, and Ser195 each carry phosphoserine. A compositionally biased stretch (polar residues) spans 197-216 (HGSTSPRVSSELEQARPQTS). UIM domains are found at residues 218-237 (EEEL…AEQE) and 243-262 (GDDL…TVKV). 2 disordered regions span residues 293 to 384 (SGPV…KPSP) and 411 to 457 (TSKK…PESF). Tandem repeats lie at residues 301–303 (EPW), 313–315 (NPW), 326–328 (DPW), and 340–342 (DPW). A compositionally biased stretch (polar residues) spans 301 to 315 (EPWSTGTPANQTNPW). The interval 301–377 (EPWSTGTPAN…SDAGKTADAW (77 aa)) is 6 X 3 AA repeats of [DE]-P-W. The span at 346–355 (TTASIQSVPK) shows a compositional bias: polar residues. 2 repeat units span residues 358-360 (DPW) and 375-377 (DAW). Position 431 is a phosphoserine (Ser431). A compositionally biased stretch (low complexity) spans 437 to 448 (SQSLTSASSKPS). The residue at position 453 (Thr453) is a Phosphothreonine. 2 repeat units span residues 482–484 (NPF) and 496–498 (NPF). Residues 482–581 (NPFLAPGAAA…AQPAGTTNPF (100 aa)) form a 3 X 3 AA repeats of N-P-F region. Ser514 bears the Phosphoserine mark. Residues 579 to 581 (NPF) form repeat 3.

Belongs to the epsin family. In terms of assembly, binds AP-2 and clathrin. Interacts with ITSN1. Interacts with UBQLN2. Binds EPS15. Post-translationally, ubiquitinated. In terms of tissue distribution, highly expressed in brain. Detected at lower levels in lung, liver, muscle and testis.

Its subcellular location is the cytoplasm. Plays a role in the formation of clathrin-coated invaginations and endocytosis. This chain is Epsin-2 (Epn2), found in Rattus norvegicus (Rat).